The following is a 56-amino-acid chain: Photosystem II assembly protein Psb34 (56 aa).

At 1–33 (MRYTTDEGGRLNNFAIEPKVYQAQPWTPQQKVR) the chain is on the cytoplasmic side. Residues 34–54 (AALLVGGGLLLVAGLVAIAVG) form a helical membrane-spanning segment. Over 55-56 (VS) the chain is Extracellular.

In terms of assembly, part of photosystem II (PSII) assembly intermediate complex PSII-I; crystallized from a strain without psbJ, it forms monomeric PSII before addition of the oxygen evolving complex. PSII-I includes 3 assembly factors not found in mature PSII (Psb27, Psb28 and Psb34). The N-terminus of Psb34 (this protein) binds to CP47 (psbB) in close proximity to PsbH on the cytoplasmic face of PSII.

It localises to the cellular thylakoid membrane. Functionally, involved in photosystem II (PSII) assembly and/or repair, probably in conversion of late PSII assembly intermediates into mature dimeric PSII. In Thermosynechococcus vestitus (strain NIES-2133 / IAM M-273 / BP-1), this protein is Photosystem II assembly protein Psb34.